Consider the following 171-residue polypeptide: Nicotinamide-nucleotide adenylyltransferase (171 aa).

This sequence belongs to the archaeal NMN adenylyltransferase family.

The protein resides in the cytoplasm. The catalysed reaction is beta-nicotinamide D-ribonucleotide + ATP + H(+) = diphosphate + NAD(+). Its pathway is cofactor biosynthesis; NAD(+) biosynthesis; NAD(+) from nicotinamide D-ribonucleotide: step 1/1. The sequence is that of Nicotinamide-nucleotide adenylyltransferase from Methanococcus maripaludis (strain C6 / ATCC BAA-1332).